Here is a 583-residue protein sequence, read N- to C-terminus: Immunity-related GTPase family Q protein (583 aa).

Residues Cys-152 and Cys-158 are joined by a disulfide bond. Positions Ser-155–Leu-179 form a coiled coil. The LIR 1 motif lies at Phe-186–Leu-189. Thr-203 bears the Phosphothreonine mark. The IRG-type G domain occupies Ala-223–Ala-409. Residues Ala-322–Ala-373 form a disordered region. Over residues Gln-332–Glu-341 the composition is skewed to acidic residues. Residues Trp-381–Leu-384 carry the LIR 2 motif.

This sequence belongs to the TRAFAC class dynamin-like GTPase superfamily. IRG family. In terms of assembly, interacts (via LIR motif 1) with GABARAPL2. Interacts (via LIR motif 2) with MAP1LC3B/LC3B.

It localises to the lysosome. Its subcellular location is the cytoplasmic vesicle. It is found in the autophagosome. In terms of biological role, autophagy receptor that specifically promotes clearance of misfolded MHC class I molecules by targeting them to the lysosome for degradation. Acts as a molecular adapter that specifically recognizes and binds (1) misfolded MHC class I molecules following their ubiquitination, as well as (2) autophagy-related proteins, promoting the recruitment of misfolded MHC class I molecules to autophagy machinery for degradation. Degradation of misfolded MHC class I molecules is essential to prevent accumulation of defective MHC class I complexes at the surface of CD8(+) T-cells and prevent a stronger T-cell-mediated response. In contrast to other members of the family, does not show GTPase activity. The chain is Immunity-related GTPase family Q protein (Irgq) from Mus musculus (Mouse).